We begin with the raw amino-acid sequence, 700 residues long: Calpain-2 catalytic subunit (700 aa).

Residue Ala2 is modified to N-acetylalanine. A propeptide spans 2 to 19 (anchors to the small subunit); that stretch reads AGIAIKLAKDREAAEGLG. Residues 45–344 form the Calpain catalytic domain; that stretch reads LFQDPSFPAL…YSRLEICNLT (300 aa). Ile89, Gly91, and Asp96 together coordinate Ca(2+). Cys105 is an active-site residue. 3 residues coordinate Ca(2+): Glu175, Gln229, and Lys230. Active-site residues include His262 and Asn286. Ca(2+)-binding residues include Glu292, Asp299, Gln319, and Glu323. A domain III region spans residues 345-514; the sequence is PDTLTCDSYK…KKADYQAVDD (170 aa). Positions 515–529 are linker; the sequence is EIEANIEEIDANEED. Positions 530 to 700 are domain IV; the sequence is IDDGFRRLFV…LASWLSFSVL (171 aa). Positions 542, 545, 547, 552, 585, 587, 589, 591, 596, 615, 617, 619, 621, 626, 658, and 661 each coordinate Ca(2+). 2 EF-hand domains span residues 572 to 605 and 602 to 637; these read FSIE…TKIQ and TKIQ…AGFK.

It belongs to the peptidase C2 family. Forms a heterodimer with a small (regulatory) subunit (CAPNS1). Interacts with CPEB3; this leads to cleavage of CPEB3. Ca(2+) is required as a cofactor. Ubiquitous.

It is found in the cytoplasm. The protein resides in the cell membrane. The catalysed reaction is Broad endopeptidase specificity.. With respect to regulation, activated by 200-1000 micromolar concentrations of calcium and inhibited by calpastatin. Its function is as follows. Calcium-regulated non-lysosomal thiol-protease which catalyzes limited proteolysis of substrates involved in cytoskeletal remodeling and signal transduction. Proteolytically cleaves MYOC at 'Arg-226'. Proteolytically cleaves CPEB3 following neuronal stimulation which abolishes CPEB3 translational repressor activity, leading to translation of CPEB3 target mRNAs. The protein is Calpain-2 catalytic subunit (Capn2) of Mus musculus (Mouse).